A 1172-amino-acid chain; its full sequence is MVWRLVLLALWVWPSTQAGHQDKDTTFDLFSISNINRKTIGAKQFRGPDPGVPAYRFVRFDYIPPVNADDLSKITKIMRQKEGFFLTAQLKQDGKSRGTLLALEGPGLSQRQFEIVSNGPADTLDLTYWIDGTRHVVSLEDVGLADSQWKNVTVQVAGETYSLHVGCDLIDSFALDEPFYEHLQAEKSRMYVAKGSARESHFRGLLQNVHLVFENSVEDILSKKGCQQGQGAEINAISENTETLRLGPHVTTEYVGPSSERRPEVCERSCEELGNMVQELSGLHVLVNQLSENLKRVSNDNQFLWELIGGPPKTRNMSACWQDGRFFAENETWVVDSCTTCTCKKFKTICHQITCPPATCASPSFVEGECCPSCLHSVDGEEGWSPWAEWTQCSVTCGSGTQQRGRSCDVTSNTCLGPSIQTRACSLSKCDTRIRQDGGWSHWSPWSSCSVTCGVGNITRIRLCNSPVPQMGGKNCKGSGRETKACQGAPCPIDGRWSPWSPWSACTVTCAGGIRERTRVCNSPEPQYGGKACVGDVQERQMCNKRSCPVDGCLSNPCFPGAQCSSFPDGSWSCGSCPVGFLGNGTHCEDLDECALVPDICFSTSKVPRCVNTQPGFHCLPCPPRYRGNQPVGVGLEAAKTEKQVCEPENPCKDKTHNCHKHAECIYLGHFSDPMYKCECQTGYAGDGLICGEDSDLDGWPNLNLVCATNATYHCIKDNCPHLPNSGQEDFDKDGIGDACDDDDDNDGVTDEKDNCQLLFNPRQADYDKDEVGDRCDNCPYVHNPAQIDTDNNGEGDACSVDIDGDDVFNERDNCPYVYNTDQRDTDGDGVGDHCDNCPLVHNPDQTDVDNDLVGDQCDNNEDIDDDGHQNNQDNCPYISNANQADHDRDGQGDACDPDDDNDGVPDDRDNCRLVFNPDQEDLDGDGRGDICKDDFDNDNIPDIDDVCPENNAISETDFRNFQMVPLDPKGTTQIDPNWVIRHQGKELVQTANSDPGIAVGFDEFGSVDFSGTFYVNTDRDDDYAGFVFGYQSSSRFYVVMWKQVTQTYWEDQPTRAYGYSGVSLKVVNSTTGTGEHLRNALWHTGNTPGQVRTLWHDPRNIGWKDYTAYRWHLTHRPKTGYIRVLVHEGKQVMADSGPIYDQTYAGGRLGLFVFSQEMVYFSDLKYECRDI.

Residues 1-18 (MVWRLVLLALWVWPSTQA) form the signal peptide. A Laminin G-like domain is found at 19–215 (GHQDKDTTFD…LQNVHLVFEN (197 aa)). The interval 19–232 (GHQDKDTTFD…KKGCQQGQGA (214 aa)) is heparin-binding. 3 N-linked (GlcNAc...) asparagine glycosylation sites follow: N151, N316, and N330. Residues 318–375 (SACWQDGRFFAENETWVVDSCTTCTCKKFKTICHQITCPPATCASPSFVEGECCPSCL) enclose the VWFC domain. TSP type-1 domains follow at residues 381 to 431 (EEGW…SKCD), 437 to 492 (DGGW…APCP), and 494 to 549 (DGRW…RSCP). Cystine bridges form between C393-C425, C397-C430, C408-C415, C449-C486, C453-C491, C464-C476, C506-C543, C510-C548, C521-C533, C553-C564, C558-C574, C577-C588, C594-C610, C601-C619, C622-C646, C652-C665, C659-C678, C680-C691, C707-C715, C720-C740, C756-C776, C779-C799, C815-C835, C838-C858, C876-C896, C912-C932, and C948-C1169. N457 is a glycosylation site (N-linked (GlcNAc...) asparagine). Residues 549 to 589 (PVDGCLSNPCFPGAQCSSFPDGSWSCGSCPVGFLGNGTHCE) enclose the EGF-like 1 domain. N584 is a glycosylation site (N-linked (GlcNAc...) asparagine). In terms of domain architecture, EGF-like 2 spans 648 to 692 (PENPCKDKTHNCHKHAECIYLGHFSDPMYKCECQTGYAGDGLICG). TSP type-3 repeat units lie at residues 693–728 (EDSDLDGWPNLNLVCATNATYHCIKDNCPHLPNSGQ), 729–764 (EDFDKDGIGDACDDDDDNDGVTDEKDNCQLLFNPRQ), 765–787 (ADYDKDEVGDRCDNCPYVHNPAQ), 788–823 (IDTDNNGEGDACSVDIDGDDVFNERDNCPYVYNTDQ), 824–846 (RDTDGDGVGDHCDNCPLVHNPDQ), 847–884 (TDVDNDLVGDQCDNNEDIDDDGHQNNQDNCPYISNANQ), 885–920 (ADHDRDGQGDACDPDDDNDGVPDDRDNCRLVFNPDQ), and 921–956 (EDLDGDGRGDICKDDFDNDNIPDIDDVCPENNAISE). A glycan (N-linked (GlcNAc...) asparagine) is linked at N710. The disordered stretch occupies residues 843–931 (NPDQTDVDND…DLDGDGRGDI (89 aa)). The span at 847–866 (TDVDNDLVGDQCDNNEDIDD) shows a compositional bias: acidic residues. Residues 870–884 (QNNQDNCPYISNANQ) show a composition bias toward polar residues. Acidic residues predominate over residues 896–905 (CDPDDDNDGV). Residues 928 to 930 (RGD) carry the Cell attachment site motif. In terms of domain architecture, TSP C-terminal spans 960 to 1172 (RNFQMVPLDP…SDLKYECRDI (213 aa)). N1069 is a glycosylation site (N-linked (GlcNAc...) asparagine).

This sequence belongs to the thrombospondin family. In terms of assembly, homotrimer; disulfide-linked. Interacts (via the TSP type I repeats) with CD36; the interaction conveys an antiangiogenic effect. Interacts (via the TSP type I repeats) with HRG; the interaction blocks the antiangiogenic effect of THBS2 with CD36. Can bind to fibrinogen, fibronectin, laminin and type V collagen. High expression in invertebral disk tissue.

Functionally, adhesive glycoprotein that mediates cell-to-cell and cell-to-matrix interactions. Ligand for CD36 mediating antiangiogenic properties. The sequence is that of Thrombospondin-2 (THBS2) from Homo sapiens (Human).